The sequence spans 158 residues: uncharacterized protein (158 aa).

This is an uncharacterized protein from Caenorhabditis elegans.